A 113-amino-acid polypeptide reads, in one-letter code: Ribosome-binding factor A (113 aa).

This sequence belongs to the RbfA family. Monomer. Binds 30S ribosomal subunits, but not 50S ribosomal subunits or 70S ribosomes.

The protein localises to the cytoplasm. One of several proteins that assist in the late maturation steps of the functional core of the 30S ribosomal subunit. Associates with free 30S ribosomal subunits (but not with 30S subunits that are part of 70S ribosomes or polysomes). Required for efficient processing of 16S rRNA. May interact with the 5'-terminal helix region of 16S rRNA. This is Ribosome-binding factor A from Mycoplasmopsis agalactiae (strain NCTC 10123 / CIP 59.7 / PG2) (Mycoplasma agalactiae).